Reading from the N-terminus, the 606-residue chain is Double-stranded RNA-binding protein Staufen homolog 2 (606 aa).

DRBM domains lie at 8 to 75 (TPMC…ESSL) and 95 to 181 (TPTV…ALKN). Disordered stretches follow at residues 57–97 (SIKK…ITPT) and 177–205 (QALK…SDAS). Residues 85 to 97 (ADSNSNPGSITPT) are compositionally biased toward polar residues. The span at 192 to 205 (SEEKKETEENSDAS) shows a compositional bias: basic and acidic residues. DRBM domains lie at 207 to 274 (SEIS…ELKK), 307 to 375 (NPIS…QLGY), and 493 to 557 (QPSQ…QLSE). The disordered stretch occupies residues 580 to 606 (RLAERTESKPTNSGTTAQDCKDSKAVV). Positions 588 to 597 (KPTNSGTTAQ) are enriched in polar residues.

RNA-binding protein required for the microtubule-dependent transport of RNAs within polarized cell types. This chain is Double-stranded RNA-binding protein Staufen homolog 2 (stau2), found in Danio rerio (Zebrafish).